A 342-amino-acid polypeptide reads, in one-letter code: Flotillin-like protein FloA (342 aa).

2 helical membrane-spanning segments follow: residues 18-38 and 39-59; these read FFIF…GKFI and SLWF…IIGM.

It belongs to the flotillin-like FloA family. As to quaternary structure, homooligomerizes.

It is found in the cell membrane. It localises to the membrane raft. In terms of biological role, found in functional membrane microdomains (FMM) that may be equivalent to eukaryotic membrane rafts. FMMs are highly dynamic and increase in number as cells age. Flotillins are thought to be important factors in membrane fluidity. This Protochlamydia amoebophila (strain UWE25) protein is Flotillin-like protein FloA.